A 370-amino-acid chain; its full sequence is tRNA-specific 2-thiouridylase MnmA (370 aa).

Residues 10–17 (AMSGGVDS) and methionine 36 each bind ATP. The Nucleophile role is filled by cysteine 111. The cysteines at positions 111 and 209 are disulfide-linked. An ATP-binding site is contributed by glycine 135. The interval 159–161 (KDQ) is interaction with tRNA. The Cysteine persulfide intermediate role is filled by cysteine 209.

Belongs to the MnmA/TRMU family.

It is found in the cytoplasm. The catalysed reaction is S-sulfanyl-L-cysteinyl-[protein] + uridine(34) in tRNA + AH2 + ATP = 2-thiouridine(34) in tRNA + L-cysteinyl-[protein] + A + AMP + diphosphate + H(+). Catalyzes the 2-thiolation of uridine at the wobble position (U34) of tRNA, leading to the formation of s(2)U34. The protein is tRNA-specific 2-thiouridylase MnmA of Koribacter versatilis (strain Ellin345).